A 184-amino-acid polypeptide reads, in one-letter code: Probable chemoreceptor glutamine deamidase CheD (184 aa).

Belongs to the CheD family.

It catalyses the reaction L-glutaminyl-[protein] + H2O = L-glutamyl-[protein] + NH4(+). Functionally, probably deamidates glutamine residues to glutamate on methyl-accepting chemotaxis receptors (MCPs), playing an important role in chemotaxis. In Rhizobium johnstonii (strain DSM 114642 / LMG 32736 / 3841) (Rhizobium leguminosarum bv. viciae), this protein is Probable chemoreceptor glutamine deamidase CheD.